Here is a 960-residue protein sequence, read N- to C-terminus: MPERHQSIDAQLRLLAPGKVSEDDKLVEYDALLVDRFLDILQDLHGPHLREFVQECYELSAEYENDRDEARLGELGSKLTSLPPGDSIVVASSFSHMLNLANLAEEVQVAQRRRIKLKRGDFADEASAPTESDIEETLKRLVSQLGKSREEVFDALKNQTVDLVFTAHPTQSVRRSLLQKHGRIRNCLRQLYAKDITADDKQELDEALQREIQAAFRTDEIRRTPPTPQDEMRAGMSYFHETIWKGVPKFLRRIDTALKNIGINERLPYNAPLIQFSSWMGGDRDGNPRVTPEVTRDVCLLARMMAANLYFSQIEDLMFELSMWRCSDELRIRADELHRSSKRAAKHYIEFWKQVPPNEPYRVILGDVRDKLYYTRERSRHLLSSGISEIPEEATFTNVEQFLEPLELCYRSLCACGDKPIADGSLLDFLRQVFNFGLALVKLDIRQESDRHTDVLDSITTHLGIGSYAEWSEEKRQDWLLSELRGKRPLFGSDLPQTEETADVLGTFHVLAELPADCFGAYIISMATAPSDVLAVELLQRECHVKQPLRVVPLFEKLADLEAAPAAVARLFSIDWYMNRINGKQEVMIGYSDSGKDAGRLSAAWQMYKAQEELIKVAKHYGVKLTMFHGRGGTVGRGGGPTHLAILSQPPDTIHGSLRVTVQGEVIEHSFGEELLCFRTLQRYTAATLEHGMHPPISPKPEWRALMDEMAVVATKEYRSIVFQEPRFVEYFRSATPETEYGRMNIGSRPSKRKPSGGIESLRAIPWIFAWTQTRFHLPVWLGFGAAIKHIMQKDIRNIHVLKEMYNEWPFFRVTLDLLEMVFAKGDPGIAAVYDKLLVAEDLQSFGEQLRKNYEETKELLLQVAGHKDVLEGDPYLKQRLRLRESYITTLNVCQAYTLKRIRDPSFQVSPQPPLSKEFTDESQPVELVQLNQQSEYAPGLEDTLILTMKGIAAGMQNTG.

Position 7 is a phosphoserine (serine 7). Active-site residues include histidine 168 and lysine 596.

The protein belongs to the PEPCase type 1 family. In terms of assembly, homotetramer. The cofactor is Mg(2+).

The protein localises to the cytoplasm. The enzyme catalyses oxaloacetate + phosphate = phosphoenolpyruvate + hydrogencarbonate. It participates in photosynthesis; C3 acid pathway. With respect to regulation, by light-reversible phosphorylation. Its function is as follows. Through the carboxylation of phosphoenolpyruvate (PEP) it forms oxaloacetate, a four-carbon dicarboxylic acid source for the tricarboxylic acid cycle. This chain is Phosphoenolpyruvate carboxylase 1 (PEPC), found in Sorghum bicolor (Sorghum).